Here is a 214-residue protein sequence, read N- to C-terminus: Large ribosomal subunit protein uL3 (214 aa).

N5-methylglutamine is present on Q153.

This sequence belongs to the universal ribosomal protein uL3 family. As to quaternary structure, part of the 50S ribosomal subunit. Forms a cluster with proteins L14 and L19. Methylated by PrmB.

One of the primary rRNA binding proteins, it binds directly near the 3'-end of the 23S rRNA, where it nucleates assembly of the 50S subunit. The chain is Large ribosomal subunit protein uL3 from Methylobacillus flagellatus (strain ATCC 51484 / DSM 6875 / VKM B-1610 / KT).